The following is a 118-amino-acid chain: Non-specific lipid-transfer protein 1 (118 aa).

Residues 1–25 (MASLRVSCLVALMCMVVISAPMAEA) form the signal peptide. 4 cysteine pairs are disulfide-bonded: Cys29–Cys76, Cys39–Cys53, Cys54–Cys99, and Cys74–Cys113.

Belongs to the plant LTP family.

Plant non-specific lipid-transfer proteins transfer phospholipids as well as galactolipids across membranes. May play a role in wax or cutin deposition in the cell walls of expanding epidermal cells and certain secretory tissues. The polypeptide is Non-specific lipid-transfer protein 1 (Lens culinaris (Lentil)).